The following is a 134-amino-acid chain: Crustacean hyperglycemic hormones isoform A (134 aa).

The first 24 residues, 1–24, serve as a signal peptide directing secretion; sequence MMACRTLCLVVVMVASLGTSGVGG. Gln-61 carries the pyrrolidone carboxylic acid modification. Position 63 is a D-phenylalanine; in form CHH-A-II (Phe-63). 3 disulfides stabilise this stretch: Cys-67–Cys-103, Cys-83–Cys-99, and Cys-86–Cys-112. A Valine amide modification is found at Val-132.

This sequence belongs to the arthropod CHH/MIH/GIH/VIH hormone family. In terms of processing, stereoinversion of L-Phe (form CHH-A-I) to D-Phe (form CHH-A-II). Produced by the medulla terminalis X-organ in the eyestalks and transported to the sinus gland where they are stored and released. Present also in the ventral nervous system.

The protein localises to the secreted. Its function is as follows. CHH is the most abundant hormone in the sinus gland of isopods and decapods which controls the blood sugar level. Has a secretagogue action over the amylase released from the midgut gland. May act as a stress hormone. Functionally, MIH may inhibit Y-organs where molting hormone (ecdysteroid) is secreted and a molting cycle is initiated when MIH secretion diminishes or stops. This chain is Crustacean hyperglycemic hormones isoform A, found in Homarus americanus (American lobster).